Consider the following 119-residue polypeptide: Ribonuclease P protein component (119 aa).

Belongs to the RnpA family. As to quaternary structure, consists of a catalytic RNA component (M1 or rnpB) and a protein subunit.

The enzyme catalyses Endonucleolytic cleavage of RNA, removing 5'-extranucleotides from tRNA precursor.. RNaseP catalyzes the removal of the 5'-leader sequence from pre-tRNA to produce the mature 5'-terminus. It can also cleave other RNA substrates such as 4.5S RNA. The protein component plays an auxiliary but essential role in vivo by binding to the 5'-leader sequence and broadening the substrate specificity of the ribozyme. This chain is Ribonuclease P protein component, found in Cronobacter sakazakii (strain ATCC BAA-894) (Enterobacter sakazakii).